A 172-amino-acid polypeptide reads, in one-letter code: 3-hydroxydecanoyl-[acyl-carrier-protein] dehydratase (172 aa).

The active site involves H71.

Belongs to the thioester dehydratase family. FabA subfamily. In terms of assembly, homodimer.

The protein localises to the cytoplasm. The catalysed reaction is a (3R)-hydroxyacyl-[ACP] = a (2E)-enoyl-[ACP] + H2O. It carries out the reaction (3R)-hydroxydecanoyl-[ACP] = (2E)-decenoyl-[ACP] + H2O. It catalyses the reaction (2E)-decenoyl-[ACP] = (3Z)-decenoyl-[ACP]. It functions in the pathway lipid metabolism; fatty acid biosynthesis. In terms of biological role, necessary for the introduction of cis unsaturation into fatty acids. Catalyzes the dehydration of (3R)-3-hydroxydecanoyl-ACP to E-(2)-decenoyl-ACP and then its isomerization to Z-(3)-decenoyl-ACP. Can catalyze the dehydratase reaction for beta-hydroxyacyl-ACPs with saturated chain lengths up to 16:0, being most active on intermediate chain length. The polypeptide is 3-hydroxydecanoyl-[acyl-carrier-protein] dehydratase (Escherichia coli O127:H6 (strain E2348/69 / EPEC)).